A 343-amino-acid chain; its full sequence is Heat-inducible transcription repressor HrcA (343 aa).

This sequence belongs to the HrcA family.

Functionally, negative regulator of class I heat shock genes (grpE-dnaK-dnaJ and groELS operons). Prevents heat-shock induction of these operons. In Mycobacterium marinum (strain ATCC BAA-535 / M), this protein is Heat-inducible transcription repressor HrcA.